The primary structure comprises 446 residues: MEGTKKYISVGELEKHNQLGDVWISIQGKVYNVTDWIKKHPGGDVPIMNLAGQDATDAFIAYHPGTAWKNLENLFTGYHLEDYLVSEISKDYRKLASEFSKAGLFEKKGHTVIYCLSFIALLLCGCVYGVLCSNSLWVHMLSGAMLGMCFIQAAYLGHDSGHYTMMSSKGYNKFAQVLNGNCLTGISIAWWKWTHNAHHIACNSLDYDPDLQHLPVFAVPSSFFKSLTSRFYGRELTFDGLSRFLVSYQHFTIYLVMIFGRINLYVQTFLLLFSTRKVPDRALNIIGILVYWTWFPYLVSCLPNWNERVLFVLTCFSVTALQHIQFTLNHFAADVYVGPPTGTNWFEKQAAGTIDISCSSWMDWFFGGLQFQLEHHLFPRMPRCQLRNISPIVQDYCKKHNLPYRSLSFFDANVATIKTLRTAALQARDLTVVPQNLLWEAFNTHG.

The Cytochrome b5 heme-binding domain maps to 5 to 89 (KKYISVGELE…LEDYLVSEIS (85 aa)). Residues His-40 and His-63 each coordinate heme. 2 helical membrane-spanning segments follow: residues 112 to 132 (VIYC…GVLC) and 136 to 156 (LWVH…AAYL). The Histidine box-1 signature appears at 158–162 (HDSGH). The next 4 membrane-spanning stretches (helical) occupy residues 174–195 (FAQV…KWTH), 253–273 (IYLV…LLLF), 282–302 (ALNI…VSCL), and 309–329 (VLFV…FTLN). The Histidine box-2 signature appears at 195-199 (HNAHH). Positions 372-376 (QLEHH) match the Histidine box-3 motif.

This sequence belongs to the fatty acid desaturase type 1 family. Requires Fe cation as cofactor. In terms of tissue distribution, expressed only in young leaves.

Its subcellular location is the membrane. It catalyses the reaction an N-acyl-(4R)-4-hydroxysphinganine + 2 Fe(II)-[cytochrome b5] + O2 + 2 H(+) = a (4R,8E)-4-hydroxysphingenine ceramide + 2 Fe(III)-[cytochrome b5] + 2 H2O. The enzyme catalyses an N-acyl-(4R)-4-hydroxysphinganine + 2 Fe(II)-[cytochrome b5] + O2 + 2 H(+) = a (4R,8Z)-4-hydroxysphing-8-enine ceramide + 2 Fe(III)-[cytochrome b5] + 2 H2O. Plays a major role as delta(8)-fatty-acid desaturase which introduces a double bond at the 8-position in the long-chain base (LCB) of ceramides with or without a hydroxy group at the 4-position. The enzyme produces both the 8E and 8Z isomers (in a 4:1 ratio). This structural modification contributes to the quantitative partitioning of ceramides between the two major sphingolipid classes, glucosylceramides and glycosylinositolphosphoryl ceramides. Sphingolipids are important membrane components involved in environmental stress responses, such as resistance to chilling, and act as cell signaling molecules. The polypeptide is Delta(8)-fatty-acid desaturase (sld1) (Borago officinalis (Bourrache)).